The chain runs to 291 residues: D-alanyl-D-alanine carboxypeptidase (291 aa).

A signal peptide spans Met-1–Ala-29. The active-site Acyl-ester intermediate is the Ser-64. Lys-67 functions as the Proton acceptor in the catalytic mechanism. Residue Ser-125 is part of the active site. Substrate is bound at residue Lys-242.

The protein belongs to the peptidase S11 family.

Its subcellular location is the secreted. It catalyses the reaction Preferential cleavage: (Ac)2-L-Lys-D-Ala-|-D-Ala. Also transpeptidation of peptidyl-alanyl moieties that are N-acyl substituents of D-alanine.. Its pathway is cell wall biogenesis; peptidoglycan biosynthesis. Its function is as follows. Removes C-terminal D-alanyl residues from sugar-peptide cell wall precursors. The protein is D-alanyl-D-alanine carboxypeptidase of Streptomyces sp. (strain K15).